Here is a 122-residue protein sequence, read N- to C-terminus: MRKSYRVKTERDFQKVFKEGQSMANRGFVVYTLPKEKQKHFRVGISVGKKVGHTAVARNRLKRFIRATLTELKPEIRSDLDFLVIARPYARDFDMERTKKNLIHVLRLAKVLSNEETETEEK.

This sequence belongs to the RnpA family. In terms of assembly, consists of a catalytic RNA component (M1 or rnpB) and a protein subunit.

The enzyme catalyses Endonucleolytic cleavage of RNA, removing 5'-extranucleotides from tRNA precursor.. In terms of biological role, RNaseP catalyzes the removal of the 5'-leader sequence from pre-tRNA to produce the mature 5'-terminus. It can also cleave other RNA substrates such as 4.5S RNA. The protein component plays an auxiliary but essential role in vivo by binding to the 5'-leader sequence and broadening the substrate specificity of the ribozyme. The polypeptide is Ribonuclease P protein component (Lactobacillus gasseri (strain ATCC 33323 / DSM 20243 / BCRC 14619 / CIP 102991 / JCM 1131 / KCTC 3163 / NCIMB 11718 / NCTC 13722 / AM63)).